A 130-amino-acid chain; its full sequence is Early 3 receptor internalization and degradation beta protein (130 aa).

The N-terminal stretch at methionine 1 to cysteine 19 is a signal peptide. The chain crosses the membrane as a helical span at residues alanine 53–leucine 77. The tract at residues tyrosine 122–leucine 125 is tyrosine-based sorting motif.

Belongs to the adenoviridae E3_RID-beta family. Interacts with E3 RID-alpha and E3 CR1-alpha. Post-translationally, phosphorylated on serine. O-glycosylated, but not N-glycosylated.

Its subcellular location is the host membrane. In terms of biological role, prevents infected cell apoptosis induced by the host immune system. Acts by down-regulating a number of cell surface receptors in the tumor necrosis factor (TNF) receptor superfamily, namely FAS, TNFRSF10A/TRAIL receptor 1, and TNFRSF10B/TRAIL receptor 2. Down-regulation of these death receptors protects adenovirus-infected cells from apoptosis induced by the death receptor ligands Fas ligand and TRAIL. RID complex also down-regulates certain tyrosine kinase cell surface receptors, especially the epidermal growth factor receptor (EGFR). RID-mediated Fas and EGFR down-regulation occurs via endocytosis of the receptors into endosomes followed by transport to and degradation within lysosomes. The chain is Early 3 receptor internalization and degradation beta protein from Human adenovirus C serotype 2 (HAdV-2).